The primary structure comprises 265 residues: MIKWPWKVQESAHQTALPWQEALSIPLLTCLTEQEQSKLVALAERFLQQKRLVPLQGFELNSLRSCRIALLFCLPVLELGLEWLDGFHEILIYPAPFVVDDEWEDDIGLVHNQRIVQSGQSWQQGPIVLNWLDIQDSFDASGFNLIIHEVAHKLDTRNGDRASGVPFISLREVAGWEHDLHAAMNNIQEEIELVGENAASIDAYAASDPAECFAVLSEYFFSAPELFAPRFPSLWQRFCQFYQQDPLQRLHHANDTDSFSATNVH.

The Zn(2+) site is built by His111, His148, His152, and Glu211.

This sequence belongs to the MtfA family. Interacts with Mlc. Zn(2+) is required as a cofactor.

The protein resides in the cytoplasm. In terms of biological role, involved in the modulation of the activity of the glucose-phosphotransferase system (glucose-PTS). Interacts with the transcriptional repressor Mlc, preventing its interaction with DNA and leading to the modulation of expression of genes regulated by Mlc, including ptsG, which encodes the PTS system glucose-specific EIICB component. Functionally, shows zinc-dependent metallopeptidase activity. The polypeptide is Mlc titration factor A (Escherichia coli O7:K1 (strain IAI39 / ExPEC)).